The sequence spans 953 residues: GATA zinc finger domain-containing protein 14 (953 aa).

Residues 1 to 21 are compositionally biased toward polar residues; that stretch reads MFEKIPNQNSHSMGDNNTGYY. Disordered regions lie at residues 1-109 and 216-756; these read MFEK…SPNR and TYGS…TQPQ. Over residues 22–89 the composition is skewed to low complexity; it reads NNNNNNNNNN…QLPSPQLSQP (68 aa). Over residues 90-109 the composition is skewed to polar residues; that stretch reads NSMNTTPNQTSPNLRSSPNR. Low complexity-rich tracts occupy residues 219 to 330, 342 to 683, and 690 to 756; these read SSNT…VNAN, NIYN…PNSS, and GNNG…TQPQ. The GATA-type zinc finger occupies 893–918; it reads CTSCGTTQTPEWRKGPAGGKSLCNAC. Residues 934-953 are disordered; it reads KVETTSSPPSTSMNVVNLLN.

This Dictyostelium discoideum (Social amoeba) protein is GATA zinc finger domain-containing protein 14 (gtaN).